The following is a 1428-amino-acid chain: DNA polymerase III PolC-type (1428 aa).

One can recognise an Exonuclease domain in the interval 414–570 (FVVFDVETTG…YDAEATGYLL (157 aa)).

The protein belongs to the DNA polymerase type-C family. PolC subfamily.

The protein localises to the cytoplasm. It carries out the reaction DNA(n) + a 2'-deoxyribonucleoside 5'-triphosphate = DNA(n+1) + diphosphate. Its function is as follows. Required for replicative DNA synthesis. This DNA polymerase also exhibits 3' to 5' exonuclease activity. This is DNA polymerase III PolC-type from Oceanobacillus iheyensis (strain DSM 14371 / CIP 107618 / JCM 11309 / KCTC 3954 / HTE831).